Consider the following 643-residue polypeptide: 1-deoxy-D-xylulose-5-phosphate synthase (643 aa).

Thiamine diphosphate is bound by residues His78 and Ala119–Ser121. Asp150 lines the Mg(2+) pocket. Residues Gly151–Ser152, Asn179, Tyr288, and Glu370 contribute to the thiamine diphosphate site. Asn179 serves as a coordination point for Mg(2+).

This sequence belongs to the transketolase family. DXPS subfamily. As to quaternary structure, homodimer. Requires Mg(2+) as cofactor. The cofactor is thiamine diphosphate.

The catalysed reaction is D-glyceraldehyde 3-phosphate + pyruvate + H(+) = 1-deoxy-D-xylulose 5-phosphate + CO2. It functions in the pathway metabolic intermediate biosynthesis; 1-deoxy-D-xylulose 5-phosphate biosynthesis; 1-deoxy-D-xylulose 5-phosphate from D-glyceraldehyde 3-phosphate and pyruvate: step 1/1. In terms of biological role, catalyzes the acyloin condensation reaction between C atoms 2 and 3 of pyruvate and glyceraldehyde 3-phosphate to yield 1-deoxy-D-xylulose-5-phosphate (DXP). The sequence is that of 1-deoxy-D-xylulose-5-phosphate synthase from Brucella melitensis biotype 2 (strain ATCC 23457).